A 498-amino-acid polypeptide reads, in one-letter code: Protein DETOXIFICATION 30 (498 aa).

12 helical membrane passes run 64–86 (YSLG…AAVS), 91–111 (VIAG…ETLC), 136–156 (VTAV…AFIG), 161–181 (ISSA…AYAV), 197–217 (VMAA…WFVI), 227–247 (LAVV…VYIF), 277–297 (AVML…AGYL), 302–322 (ISVA…MIAI), 349–369 (LVAV…LLIF), 393–413 (ILAV…VAVG), 419–439 (VVAY…GLLL), and 447–467 (VMGI…VLTW).

This sequence belongs to the multi antimicrobial extrusion (MATE) (TC 2.A.66.1) family.

Its subcellular location is the membrane. This Arabidopsis thaliana (Mouse-ear cress) protein is Protein DETOXIFICATION 30.